We begin with the raw amino-acid sequence, 443 residues long: Threonine/serine transporter TdcC (443 aa).

Helical transmembrane passes span 22–42, 44–64, 97–117, 140–160, 163–183, 207–227, 259–279, 319–339, 366–386, 389–409, and 423–443; these read TTWT…FFPI, AGFG…PIAF, GVVI…IYGV, FVAL…KDLM, VMSY…LSLI, ILVT…FSPI, ASML…FTLS, ASII…LGTL, ISMI…PNIL, IEAM…MYAI, and DNVF…YKLF.

It belongs to the amino acid/polyamine transporter 2 family. SdaC/TdcC subfamily.

The protein localises to the cell inner membrane. The enzyme catalyses L-threonine(in) + H(+)(in) = L-threonine(out) + H(+)(out). The catalysed reaction is L-serine(in) + H(+)(in) = L-serine(out) + H(+)(out). In terms of biological role, involved in the import of threonine and serine into the cell, with the concomitant import of a proton (symport system). This is Threonine/serine transporter TdcC from Salmonella paratyphi B (strain ATCC BAA-1250 / SPB7).